Consider the following 519-residue polypeptide: Histidine ammonia-lyase (519 aa).

Positions 146-148 (ASG) form a cross-link, 5-imidazolinone (Ala-Gly). Residue serine 147 is modified to 2,3-didehydroalanine (Ser).

Belongs to the PAL/histidase family. Contains an active site 4-methylidene-imidazol-5-one (MIO), which is formed autocatalytically by cyclization and dehydration of residues Ala-Ser-Gly.

It localises to the cytoplasm. The catalysed reaction is L-histidine = trans-urocanate + NH4(+). It functions in the pathway amino-acid degradation; L-histidine degradation into L-glutamate; N-formimidoyl-L-glutamate from L-histidine: step 1/3. In Psychrobacter sp. (strain PRwf-1), this protein is Histidine ammonia-lyase.